A 447-amino-acid chain; its full sequence is Cysteine--tRNA ligase (447 aa).

Zn(2+) is bound at residue Cys28. Residues 30–40 (PTVYNYIHIGN) carry the 'HIGH' region motif. The Zn(2+) site is built by Cys211, His236, and Glu240. Residues 268–272 (KMSKS) carry the 'KMSKS' region motif. Lys271 provides a ligand contact to ATP.

Belongs to the class-I aminoacyl-tRNA synthetase family. In terms of assembly, monomer. Zn(2+) is required as a cofactor.

The protein localises to the cytoplasm. It carries out the reaction tRNA(Cys) + L-cysteine + ATP = L-cysteinyl-tRNA(Cys) + AMP + diphosphate. This is Cysteine--tRNA ligase from Streptococcus thermophilus (strain CNRZ 1066).